A 531-amino-acid chain; its full sequence is Apolipoprotein N-acyltransferase (531 aa).

A run of 7 helical transmembrane segments spans residues 8–28, 34–54, 69–89, 105–125, 136–156, 178–198, and 206–226; these read IILLSGVSRTFVGFLAGLLAV, FGIFAAAFVSFPVLVWLIDGV, PAAIGWSFGFGYFLGGLWWLG, LTVVGLPAVLGLFYALAVVIA, IAALALGFGIAEWLRGFLFTG, VVNLSTINMLAVFVFAAPALI, and AGLAIAAALFTAHVAFGFYRL. The CN hydrolase domain occupies 243 to 493; sequence VQPVIDQAKK…RGVIDTILPG (251 aa). E287 serves as the catalytic Proton acceptor. The active site involves K351. C405 acts as the Nucleophile in catalysis. A helical membrane pass occupies residues 507–527; the sequence is IFWLTTGILFLVAAISRLGFN.

The protein belongs to the CN hydrolase family. Apolipoprotein N-acyltransferase subfamily.

Its subcellular location is the cell inner membrane. It carries out the reaction N-terminal S-1,2-diacyl-sn-glyceryl-L-cysteinyl-[lipoprotein] + a glycerophospholipid = N-acyl-S-1,2-diacyl-sn-glyceryl-L-cysteinyl-[lipoprotein] + a 2-acyl-sn-glycero-3-phospholipid + H(+). It functions in the pathway protein modification; lipoprotein biosynthesis (N-acyl transfer). Functionally, catalyzes the phospholipid dependent N-acylation of the N-terminal cysteine of apolipoprotein, the last step in lipoprotein maturation. This is Apolipoprotein N-acyltransferase from Rhizobium meliloti (strain 1021) (Ensifer meliloti).